The chain runs to 213 residues: Outer-membrane lipoprotein LolB (213 aa).

An N-terminal signal peptide occupies residues 1–24 (MNNLSYFTKTKLVWVILSLSLLSA). Cys25 carries N-palmitoyl cysteine lipidation. Cys25 carries the S-diacylglycerol cysteine lipid modification.

The protein belongs to the LolB family. Monomer.

The protein localises to the cell outer membrane. In terms of biological role, plays a critical role in the incorporation of lipoproteins in the outer membrane after they are released by the LolA protein. This chain is Outer-membrane lipoprotein LolB, found in Shewanella woodyi (strain ATCC 51908 / MS32).